The following is a 724-amino-acid chain: uncharacterized protein (724 aa).

Disordered regions lie at residues 97–131 (RKSF…YPSP), 187–252 (ETKI…FETE), 309–434 (FETE…TSKL), and 454–473 (RGVE…VAEK). The segment covering 115-128 (TRSASYSESNNSFY) has biased composition (polar residues). The stretch at 187–217 (ETKIGIEEENEESEILAEEKEEEDNDFSVLE) forms a coiled coil. The segment covering 193-212 (EEENEESEILAEEKEEEDND) has biased composition (acidic residues). 2 stretches are compositionally biased toward basic and acidic residues: residues 223–252 (QEIK…FETE) and 309–322 (FETE…DHSE). 2 stretches are compositionally biased toward low complexity: residues 323–333 (TTTSETDSTES) and 347–366 (SPQT…SLRS). The span at 367–388 (QPPPPPPSPEHKAPAPPPPPPM) shows a compositional bias: pro residues. Over residues 400–410 (FSKTHSTNGDN) the composition is skewed to polar residues. 2 coiled-coil regions span residues 495–522 (SYFQ…HSFQ) and 649–678 (MELA…RAKR).

This is an uncharacterized protein from Arabidopsis thaliana (Mouse-ear cress).